The chain runs to 449 residues: GTP-binding protein A (449 aa).

A disordered region spans residues 1–77 (MFNINPYKSK…LSSKTENSLS (77 aa)). Composition is skewed to low complexity over residues 8–46 (KSKT…SSSS) and 67–77 (SLSSKTENSLS). One can recognise an AIG1-type G domain in the interval 149-386 (QNECNVLLLG…FMGHLRAKNK (238 aa)). Positions 158-165 (GRTGVGKS) are G1. Residue 158–165 (GRTGVGKS) coordinates GTP. A G2 region spans residues 183–187 (SCTQD). The interval 204-207 (DTPG) is G3. The segment at 275–278 (TYAN) is G4. The tract at residues 336–338 (ENS) is G5.

This sequence belongs to the TRAFAC class TrmE-Era-EngA-EngB-Septin-like GTPase superfamily. AIG1/Toc34/Toc159-like paraseptin GTPase family. IAN subfamily.

In Dictyostelium discoideum (Social amoeba), this protein is GTP-binding protein A (gtpA).